Consider the following 1082-residue polypeptide: Putative white-brown complex homolog protein 30 (1082 aa).

A run of 2 helical transmembrane segments spans residues 12–32 (HIFL…SLDG) and 292–312 (NIHA…IMVY). Residues 329 to 348 (SREAAARHAKETTQARERWK) show a composition bias toward basic and acidic residues. The interval 329–437 (SREAAARHAK…QAPKGKQLHT (109 aa)) is disordered. Residues 484 to 726 (VAFKDLTLTL…FADIGITVPD (243 aa)) form the ABC transporter domain. Residue 518–525 (GPSGAGKT) coordinates ATP. Residues 832–1029 (RQYRYFVGRV…TLEAFVLSNA (198 aa)) enclose the ABC transmembrane type-2 domain. The next 5 membrane-spanning stretches (helical) occupy residues 853-873 (ALDF…AKVN), 877-897 (IDTL…KISA), 958-978 (YIVL…FAIL), 979-999 (YSPS…TLIA), and 1054-1074 (WILC…IAYF).

It belongs to the ABC transporter superfamily. ABCG family. Eye pigment precursor importer (TC 3.A.1.204) subfamily.

It is found in the membrane. This chain is Putative white-brown complex homolog protein 30 (WBC30), found in Arabidopsis thaliana (Mouse-ear cress).